The chain runs to 1235 residues: Gem-associated protein 5 (1235 aa).

One copy of the WD 1 repeat lies at 55–102 (STRINILALDVSPMWGLGNGGPTKPFAIVGDDLSVQVWDCALGEAVIG). The interval 227 to 263 (NNLALSAEEWRSRNGGQEEKPKTKPPPLTKSKAAESD) is disordered. The segment covering 234–248 (EEWRSRNGGQEEKPK) has biased composition (basic and acidic residues). Residues S289, S290, S351, and S354 each carry the phosphoserine modification. A disordered region spans residues 340–368 (DCEPTKPTGPLSDASTISNKNDASDSTEG). Residues 352–368 (DASTISNKNDASDSTEG) are compositionally biased toward polar residues. T355 bears the Phosphothreonine mark. Position 357 is a phosphoserine (S357). At T411 the chain carries Phosphothreonine. WD repeat units follow at residues 428–469 (ISAE…HAGK), 475–512 (KTAGKLNNVYWLNNHVIVSLSRHQLFFWSVEFERKMLR), 565–605 (TVAF…TSCL), 611–650 (YVSSNVYCLAWSPNCLELAFGTFDGTVGILDVERMKVKTH), 690–730 (TIVN…EKSW), 739–779 (LFAR…RNWK), and 788–828 (TEKA…KPPL). An LXXLL motif motif is present at residues 443-447 (LETLL). A compositionally biased stretch (basic and acidic residues) spans 963–980 (KEQNNRSAKECPKCKEQS). Residues 963–983 (KEQNNRSAKECPKCKEQSPDS) form a disordered region.

Component of the core survival motor neuron (SMN) complex composed of Smn, Gem2, Gem3, rig/Gem5 and one of 3 almost identical Gem4 paralogs encoded by Glos/Gem4a, Gem4b or Gem4c. Interacts with nuclear receptors EcR, svp (seven up), usp (ultraspiracle), Hr39 and Hr3. As to expression, expressed in the brain and salivary glands of early and late second instar larvae. Expressed in nurse cells and oocytes.

It localises to the nucleus. Its subcellular location is the cytoplasm. It is found in the U-body. The protein localises to the gem. Functionally, component of the survival motor neuron (SMN) complex that catalyzes the assembly of small nuclear ribonucleoproteins (snRNPs), the building blocks of the spliceosome, and thereby plays an important role in the splicing of cellular pre-mRNAs. Nuclear receptor cofactor for the ecdysone-regulated processes of molting and puparium formation. Acts downstream from ecdysone biosynthesis and release to control the expression of specific ecdysone-regulated genes such as Eip74EF (E74). Essential in muscle and neuronal tissues for motor function, including climbing ability and flight. This Drosophila melanogaster (Fruit fly) protein is Gem-associated protein 5.